The primary structure comprises 94 residues: Ribonuclease P protein component 1 (94 aa).

This sequence belongs to the eukaryotic/archaeal RNase P protein component 1 family. As to quaternary structure, consists of a catalytic RNA component and at least 4-5 protein subunits.

It is found in the cytoplasm. The enzyme catalyses Endonucleolytic cleavage of RNA, removing 5'-extranucleotides from tRNA precursor.. Part of ribonuclease P, a protein complex that generates mature tRNA molecules by cleaving their 5'-ends. In Haloarcula marismortui (strain ATCC 43049 / DSM 3752 / JCM 8966 / VKM B-1809) (Halobacterium marismortui), this protein is Ribonuclease P protein component 1.